The sequence spans 498 residues: Transcription factor bHLH78 (498 aa).

Disordered stretches follow at residues 1-24 (MDNE…FEHQ) and 207-297 (LVSP…PPKD). Residues 233 to 246 (NPISTASPSPSFSK) are compositionally biased toward polar residues. The segment covering 259-270 (SSEEKGGKRRRE) has biased composition (basic and acidic residues). A compositionally biased stretch (acidic residues) spans 271–281 (EEDDEEEEGEG). The 51-residue stretch at 307–357 (QATDSHSLAERVRREKIGERMKLLQDLVPGCNKVTGKALMLDEIINYVQSL) folds into the bHLH domain.

As to quaternary structure, homodimer. Binds reversibly to CRY2 after blue light illumination. Expressed constitutively in roots, leaves, stems, and flowers.

It is found in the nucleus. Functionally, transcription factor that binds DNA to G box 5'-CACGTG-3' and to E-box 5'-CANNTG-3'. Binds to chromatin DNA of the FT gene and promotes its expression, and thus triggers flowering in response to blue light. This chain is Transcription factor bHLH78 (BHLH78), found in Arabidopsis thaliana (Mouse-ear cress).